We begin with the raw amino-acid sequence, 137 residues long: Small ribosomal subunit protein uS12 (137 aa).

The disordered stretch occupies residues 1 to 24 (MPTINQLVRKGRRSQSSKSKAPAL). Aspartate 102 carries the post-translational modification 3-methylthioaspartic acid.

Belongs to the universal ribosomal protein uS12 family. Part of the 30S ribosomal subunit. Contacts proteins S8 and S17. May interact with IF1 in the 30S initiation complex.

In terms of biological role, with S4 and S5 plays an important role in translational accuracy. Functionally, interacts with and stabilizes bases of the 16S rRNA that are involved in tRNA selection in the A site and with the mRNA backbone. Located at the interface of the 30S and 50S subunits, it traverses the body of the 30S subunit contacting proteins on the other side and probably holding the rRNA structure together. The combined cluster of proteins S8, S12 and S17 appears to hold together the shoulder and platform of the 30S subunit. The polypeptide is Small ribosomal subunit protein uS12 (Pediococcus pentosaceus (strain ATCC 25745 / CCUG 21536 / LMG 10740 / 183-1w)).